An 810-amino-acid polypeptide reads, in one-letter code: Probable dehydratase YbiW (810 aa).

One can recognise a PFL domain in the interval Asp11 to Lys682. The segment at Thr677–His699 is disordered. The region spanning Glu689–Leu810 is the Glycine radical domain. Gly786 bears the Glycine radical mark.

The protein belongs to the glycyl radical enzyme (GRE) family.

Its function is as follows. Probably shows dehydratase activity. The chain is Probable dehydratase YbiW (ybiW) from Escherichia coli (strain K12).